The sequence spans 20 residues: Protein PR-L1 (20 aa).

The protein belongs to the BetVI family.

The sequence is that of Protein PR-L1 from Lupinus luteus (European yellow lupine).